A 79-amino-acid chain; its full sequence is D-alanyl carrier protein (79 aa).

The Carrier domain maps to 1-76 (MKEQIFDIIE…KIAARVQEKK (76 aa)). Residue serine 34 is modified to O-(pantetheine 4'-phosphoryl)serine.

Belongs to the DltC family. 4'-phosphopantetheine is transferred from CoA to a specific serine of apo-DCP.

The protein localises to the cytoplasm. It functions in the pathway cell wall biogenesis; lipoteichoic acid biosynthesis. In terms of biological role, carrier protein involved in the D-alanylation of lipoteichoic acid (LTA). The loading of thioester-linked D-alanine onto DltC is catalyzed by D-alanine--D-alanyl carrier protein ligase DltA. The DltC-carried D-alanyl group is further transferred to cell membrane phosphatidylglycerol (PG) by forming an ester bond, probably catalyzed by DltD. D-alanylation of LTA plays an important role in modulating the properties of the cell wall in Gram-positive bacteria, influencing the net charge of the cell wall. The protein is D-alanyl carrier protein of Lactococcus lactis subsp. lactis (strain IL1403) (Streptococcus lactis).